The chain runs to 774 residues: Lysyl oxidase homolog 2 (774 aa).

Positions 1 to 25 are cleaved as a signal peptide; the sequence is MERPLCSHLCSCLAMLALLSPLSLA. 4 consecutive SRCR domains span residues 58–159, 188–302, 326–425, and 435–544; these read LRLA…VVCS, IRAI…VSCV, VRLR…VRCN, and LRLN…VACS. Cystine bridges form between C84–C148, C97–C158, C128–C138, C218–C291, C231–C301, C265–C275, C351–C414, C364–C424, and C395–C405. N-linked (GlcNAc...) asparagine glycosylation occurs at N288. An N-linked (GlcNAc...) (complex) asparagine glycan is attached at N455. 3 cysteine pairs are disulfide-bonded: C464–C530, C477–C543, and C511–C521. The segment at 548-751 is lysyl-oxidase like; that stretch reads PDLVLNAEMV…WMYNCHIGGS (204 aa). The Ca(2+) site is built by D549 and L550. 4 cysteine pairs are disulfide-bonded: C573-C625, C579-C695, C657-C673, and C663-C685. Residues H626, H628, and H630 each contribute to the Cu cation site. The N-linked (GlcNAc...) (complex) asparagine glycan is linked to N644. The segment at residues 653–689 is a cross-link (lysine tyrosylquinone (Lys-Tyr)); it reads KASFCLEDTECEGDIQKNYECANFGDQGITMGCWDMY. A 2',4',5'-topaquinone modification is found at Y689. 4 residues coordinate Ca(2+): E722, D724, N727, and N728. C732 and C746 are disulfide-bonded.

The protein belongs to the lysyl oxidase family. In terms of assembly, component of some chromatin repressor complex. Interacts with SNAI1. Interacts with TAF10. Interacts with HSPA5. Interacts with EFEMP2. Cu cation serves as cofactor. Lysine tyrosylquinone residue is required as a cofactor. The lysine tyrosylquinone cross-link (LTQ) is generated by condensation of the epsilon-amino group of a lysine with a topaquinone produced by oxidation of tyrosine. In terms of processing, N-glycosylated. N-glycosylation on Asn-455 and Asn-644 may be essential for proper folding and secretion; may be composed of a fucosylated carbohydrates attached to a trimannose N-linked glycan core. As to expression, expressed in many tissues. Highest expression in reproductive tissues, placenta, uterus and prostate. In esophageal epithelium, expressed in the basal, prickle and granular cell layers. Up-regulated in a number of cancers cells and tissues.

The protein localises to the secreted. Its subcellular location is the extracellular space. The protein resides in the extracellular matrix. It is found in the basement membrane. It localises to the nucleus. The protein localises to the chromosome. Its subcellular location is the endoplasmic reticulum. The enzyme catalyses L-lysyl-[protein] + O2 + H2O = (S)-2-amino-6-oxohexanoyl-[protein] + H2O2 + NH4(+). With respect to regulation, according to some reports, it is inhibited by beta-aminopropionitrile (BAPN). According to another report, it is not inhibited by beta-aminopropionitrile (BAPN). Specifically inhibited by a mouse monoclonal antibody AB0023, inhibition occurs in a non-competitive manner. Mediates the post-translational oxidative deamination of lysine residues on target proteins leading to the formation of deaminated lysine (allysine). Acts as a transcription corepressor and specifically mediates deamination of trimethylated 'Lys-4' of histone H3 (H3K4me3), a specific tag for epigenetic transcriptional activation. Shows no activity against histone H3 when it is trimethylated on 'Lys-9' (H3K9me3) or 'Lys-27' (H3K27me3) or when 'Lys-4' is monomethylated (H3K4me1) or dimethylated (H3K4me2). Also mediates deamination of methylated TAF10, a member of the transcription factor IID (TFIID) complex, which induces release of TAF10 from promoters, leading to inhibition of TFIID-dependent transcription. LOXL2-mediated deamination of TAF10 results in transcriptional repression of genes required for embryonic stem cell pluripotency including POU5F1/OCT4, NANOG, KLF4 and SOX2. Involved in epithelial to mesenchymal transition (EMT) via interaction with SNAI1 and participates in repression of E-cadherin CDH1, probably by mediating deamination of histone H3. During EMT, involved with SNAI1 in negatively regulating pericentromeric heterochromatin transcription. SNAI1 recruits LOXL2 to pericentromeric regions to oxidize histone H3 and repress transcription which leads to release of heterochromatin component CBX5/HP1A, enabling chromatin reorganization and acquisition of mesenchymal traits. Interacts with the endoplasmic reticulum protein HSPA5 which activates the IRE1-XBP1 pathway of the unfolded protein response, leading to expression of several transcription factors involved in EMT and subsequent EMT induction. Involved in E-cadherin repression following hypoxia, a hallmark of EMT believed to amplify tumor aggressiveness, suggesting that it may play a role in tumor progression. When secreted into the extracellular matrix, promotes cross-linking of extracellular matrix proteins by mediating oxidative deamination of peptidyl lysine residues in precursors to fibrous collagen and elastin. Acts as a regulator of sprouting angiogenesis, probably via collagen IV scaffolding. Acts as a regulator of chondrocyte differentiation, probably by regulating expression of factors that control chondrocyte differentiation. This is Lysyl oxidase homolog 2 (LOXL2) from Homo sapiens (Human).